Consider the following 279-residue polypeptide: Thymidylate synthase (279 aa).

Residue 133 to 134 participates in dUMP binding; it reads RR. Cys154 (nucleophile) is an active-site residue. DUMP contacts are provided by residues 178–181, Asn189, and 219–221; these read RSND and HIY. Position 181 (Asp181) interacts with (6R)-5,10-methylene-5,6,7,8-tetrahydrofolate. Residue Ala278 participates in (6R)-5,10-methylene-5,6,7,8-tetrahydrofolate binding.

It belongs to the thymidylate synthase family. Bacterial-type ThyA subfamily. Homodimer.

Its subcellular location is the cytoplasm. The catalysed reaction is dUMP + (6R)-5,10-methylene-5,6,7,8-tetrahydrofolate = 7,8-dihydrofolate + dTMP. Its pathway is pyrimidine metabolism; dTTP biosynthesis. Its function is as follows. Catalyzes the reductive methylation of 2'-deoxyuridine-5'-monophosphate (dUMP) to 2'-deoxythymidine-5'-monophosphate (dTMP) while utilizing 5,10-methylenetetrahydrofolate (mTHF) as the methyl donor and reductant in the reaction, yielding dihydrofolate (DHF) as a by-product. This enzymatic reaction provides an intracellular de novo source of dTMP, an essential precursor for DNA biosynthesis. This is Thymidylate synthase from Streptococcus mutans serotype c (strain ATCC 700610 / UA159).